The primary structure comprises 186 residues: ATP synthase subunit delta (186 aa).

Belongs to the ATPase delta chain family. As to quaternary structure, F-type ATPases have 2 components, F(1) - the catalytic core - and F(0) - the membrane proton channel. F(1) has five subunits: alpha(3), beta(3), gamma(1), delta(1), epsilon(1). CF(0) has four main subunits: a(1), b(1), b'(1) and c(10-14). The alpha and beta chains form an alternating ring which encloses part of the gamma chain. F(1) is attached to F(0) by a central stalk formed by the gamma and epsilon chains, while a peripheral stalk is formed by the delta, b and b' chains.

It localises to the cell inner membrane. F(1)F(0) ATP synthase produces ATP from ADP in the presence of a proton or sodium gradient. F-type ATPases consist of two structural domains, F(1) containing the extramembraneous catalytic core and F(0) containing the membrane proton channel, linked together by a central stalk and a peripheral stalk. During catalysis, ATP synthesis in the catalytic domain of F(1) is coupled via a rotary mechanism of the central stalk subunits to proton translocation. Its function is as follows. This protein is part of the stalk that links CF(0) to CF(1). It either transmits conformational changes from CF(0) to CF(1) or is implicated in proton conduction. The sequence is that of ATP synthase subunit delta from Roseobacter denitrificans (strain ATCC 33942 / OCh 114) (Erythrobacter sp. (strain OCh 114)).